A 307-amino-acid chain; its full sequence is Sporulation sigma-E factor-processing peptidase (307 aa).

A run of 5 helical transmembrane segments spans residues 7–27 (LIWM…AVVL), 36–56 (LLLG…PFSH), 57–77 (LMVH…MTFG), 89–109 (LTFY…HFLF), and 127–147 (FGDP…SYFS). Residue Asp183 is part of the active site.

Belongs to the peptidase U4 family. Self-associates. Interacts with SigE. Interacts with SpoIIR.

The protein resides in the cell membrane. Probable aspartic protease that is responsible for the proteolytic cleavage of the RNA polymerase sigma E factor (SigE/spoIIGB) to yield the active peptide in the mother cell during sporulation. Responds to a signal from the forespore that is triggered by the extracellular signal protein SpoIIR. This is Sporulation sigma-E factor-processing peptidase from Priestia megaterium (strain ATCC 12872 / QMB1551) (Bacillus megaterium).